The following is a 721-amino-acid chain: Sodium/hydrogen exchanger 6 (721 aa).

Positions 1-44 are disordered; sequence MTSPKPWARSAGSCQTQRAVRTRKKECREEGESDTEKGPAASSA. Residues 26–37 are compositionally biased toward basic and acidic residues; that stretch reads ECREEGESDTEK. A run of 12 helical transmembrane segments spans residues 91 to 111, 123 to 143, 196 to 216, 231 to 251, 272 to 292, 298 to 318, 344 to 364, 388 to 412, 434 to 454, 456 to 476, 499 to 519, and 535 to 555; these read SANL…IWLF, GLAM…IHVP, VTFD…FYAG, ILAY…SIMY, CLLF…AIFH, VELY…AIVL, IGIF…TGVV, MSWS…FCGI, FELL…LTLF, FQNH…IFLG, NFQH…ALAI, and LLIV…MLSC.

The protein belongs to the monovalent cation:proton antiporter 1 (CPA1) transporter (TC 2.A.36) family. Homodimer. Interacts with RACK1; regulates the distribution of SLC9A6 between endosomes and the plasma membrane. Post-translationally, ubiquitinated (in vitro). In terms of processing, glycosylated.

Its subcellular location is the endosome membrane. It localises to the recycling endosome membrane. The protein resides in the early endosome membrane. It is found in the late endosome membrane. The protein localises to the cell membrane. It catalyses the reaction Na(+)(in) + H(+)(out) = Na(+)(out) + H(+)(in). The catalysed reaction is K(+)(in) + H(+)(out) = K(+)(out) + H(+)(in). In terms of biological role, endosomal Na(+), K(+)/H(+) antiporter. Mediates the electroneutral exchange of endosomal luminal H(+) for a cytosolic Na(+) or K(+). By facilitating proton efflux, SLC9A6 counteracts the acidity generated by vacuolar (V)-ATPase, thereby limiting luminal acidification. Responsible for alkalizing and maintaining the endosomal pH, and consequently in, e.g., endosome maturation and trafficking of recycling endosomal cargo. Plays a critical role during neurodevelopment by regulating synaptic development and plasticity. Implicated in the maintenance of cell polarity in a manner that is dependent on its ability to modulate intravesicular pH. Regulates intracelular pH in some specialized cells, osteoclasts and stereocilia where this transporter localizes to the plasma membrane. The polypeptide is Sodium/hydrogen exchanger 6 (Rattus norvegicus (Rat)).